The chain runs to 192 residues: Ribosome maturation factor RimM (192 aa).

The region spanning 99–186 is the PRC barrel domain; that stretch reads ADEYHVSELV…RIEIAPPPGL (88 aa).

It belongs to the RimM family. As to quaternary structure, binds ribosomal protein uS19.

The protein localises to the cytoplasm. Functionally, an accessory protein needed during the final step in the assembly of 30S ribosomal subunit, possibly for assembly of the head region. Essential for efficient processing of 16S rRNA. May be needed both before and after RbfA during the maturation of 16S rRNA. It has affinity for free ribosomal 30S subunits but not for 70S ribosomes. In Microcystis aeruginosa (strain NIES-843 / IAM M-2473), this protein is Ribosome maturation factor RimM.